The primary structure comprises 552 residues: uncharacterized protein (552 aa).

A disordered region spans residues 1-59 (MPLEKTNTHDSTATVEDQEATDNPMHLTQSRMLDLAGNPNRTTSRQSETLFPNGVDLNY). A compositionally biased stretch (polar residues) spans 39-50 (PNRTTSRQSETL). A run of 12 helical transmembrane segments spans residues 116–136 (ITIVNSLLVVCSAFGSSVIAG), 158–178 (LMVVGFGIGPLVISPLSEMIG), 181–201 (IVYLVTLMIYIVLQIPCALAP), 203–223 (IACLLIVRFFCGCFGCTPLTL), 238–258 (GLAIAFFAAGPYAGPTLGPLV), 271–291 (WIFWVNMIYMFVMYLTLLPVP), 345–365 (ILVCISGYIALIYALLYGYFF), 383–403 (GLMFIPILVGVVGALSTTPFL), 424–444 (LVGMCIASPFIPTGLLIFAWT), 450–470 (IWIGPAFSGAPFGYGMVLFYF), 484–506 (CASALAAKTMVRSAGGAAFPLFI), and 519–539 (FFLLGMVAVAAIPIPFTFYLF).

The protein belongs to the major facilitator superfamily.

Its subcellular location is the membrane. This is an uncharacterized protein from Schizosaccharomyces pombe (strain 972 / ATCC 24843) (Fission yeast).